We begin with the raw amino-acid sequence, 289 residues long: ATP synthase gamma chain (289 aa).

The protein belongs to the ATPase gamma chain family. F-type ATPases have 2 components, CF(1) - the catalytic core - and CF(0) - the membrane proton channel. CF(1) has five subunits: alpha(3), beta(3), gamma(1), delta(1), epsilon(1). CF(0) has three main subunits: a, b and c.

Its subcellular location is the cell membrane. Functionally, produces ATP from ADP in the presence of a proton gradient across the membrane. The gamma chain is believed to be important in regulating ATPase activity and the flow of protons through the CF(0) complex. This chain is ATP synthase gamma chain, found in Alkaliphilus metalliredigens (strain QYMF).